Reading from the N-terminus, the 154-residue chain is MVRAVAVLRGDSKVSGVVTFEQVDQNSQVSVIVDLVGNDANAKRGFHIHQFGDNTNGCTSAGPHFNPEGKTHGDRTAAVRHVGDLGNLESDAQGNIKTTFSDSVISLFGANSIIGRTIVIHAGEDDLGKGTSEESLKTGNAGARNACGVIGIAV.

Positions 47, 49, and 64 each coordinate Cu cation. An intrachain disulfide couples cysteine 58 to cysteine 147. Histidine 64, histidine 72, histidine 81, and aspartate 84 together coordinate Zn(2+). Cu cation is bound at residue histidine 121. Residue arginine 144 coordinates substrate.

It belongs to the Cu-Zn superoxide dismutase family. In terms of assembly, homodimer. It depends on Cu cation as a cofactor. Zn(2+) serves as cofactor.

It localises to the cytoplasm. It catalyses the reaction 2 superoxide + 2 H(+) = H2O2 + O2. In terms of biological role, destroys radicals which are normally produced within the cells and which are toxic to biological systems. The polypeptide is Superoxide dismutase [Cu-Zn] (sod1) (Schizosaccharomyces pombe (strain 972 / ATCC 24843) (Fission yeast)).